We begin with the raw amino-acid sequence, 629 residues long: tRNA uridine 5-carboxymethylaminomethyl modification enzyme MnmG (629 aa).

Residues 18 to 23 (GGGHAG), V130, and S188 each bind FAD. NAD(+) is bound at residue 280–294 (GPRYCPSIEDKVVRF). Position 377 (Q377) interacts with FAD.

This sequence belongs to the MnmG family. As to quaternary structure, homodimer. Heterotetramer of two MnmE and two MnmG subunits. Requires FAD as cofactor.

It is found in the cytoplasm. Its function is as follows. NAD-binding protein involved in the addition of a carboxymethylaminomethyl (cmnm) group at the wobble position (U34) of certain tRNAs, forming tRNA-cmnm(5)s(2)U34. This chain is tRNA uridine 5-carboxymethylaminomethyl modification enzyme MnmG, found in Granulibacter bethesdensis (strain ATCC BAA-1260 / CGDNIH1).